The primary structure comprises 152 residues: Nucleoside diphosphate kinase A 2 (152 aa).

ATP is bound by residues Lys-12, Phe-60, Arg-88, Thr-94, Arg-105, and Asn-115. His-118 serves as the catalytic Pros-phosphohistidine intermediate.

It belongs to the NDK family. In terms of assembly, homohexamer. The cofactor is Mg(2+). The N-terminus is blocked.

It localises to the cytoplasm. Its subcellular location is the cell membrane. The protein resides in the nucleus. The enzyme catalyses a 2'-deoxyribonucleoside 5'-diphosphate + ATP = a 2'-deoxyribonucleoside 5'-triphosphate + ADP. The catalysed reaction is a ribonucleoside 5'-diphosphate + ATP = a ribonucleoside 5'-triphosphate + ADP. Its activity is regulated as follows. Autophosphorylation at His-118 increases serine/threonine protein kinase activity of the enzyme. Interaction with the SET complex inhibits exonuclease activity. Major role in the synthesis of nucleoside triphosphates other than ATP. Possesses nucleoside-diphosphate kinase, serine/threonine-specific protein kinase, geranyl and farnesyl pyrophosphate kinase, histidine protein kinase and 3'-5' exonuclease activities. Involved in cell proliferation, differentiation and development, signal transduction, G protein-coupled receptor endocytosis, and gene expression. Required for neural development including neural patterning and cell fate determination. The sequence is that of Nucleoside diphosphate kinase A 2 (NME1-2) from Bos taurus (Bovine).